A 158-amino-acid chain; its full sequence is Transcription elongation factor GreA (158 aa).

Residues 4–75 adopt a coiled-coil conformation; sequence QKQYPMTQEG…QRVENMLRNA (72 aa).

The protein belongs to the GreA/GreB family.

In terms of biological role, necessary for efficient RNA polymerase transcription elongation past template-encoded arresting sites. The arresting sites in DNA have the property of trapping a certain fraction of elongating RNA polymerases that pass through, resulting in locked ternary complexes. Cleavage of the nascent transcript by cleavage factors such as GreA or GreB allows the resumption of elongation from the new 3'terminus. GreA releases sequences of 2 to 3 nucleotides. The polypeptide is Transcription elongation factor GreA (Staphylococcus saprophyticus subsp. saprophyticus (strain ATCC 15305 / DSM 20229 / NCIMB 8711 / NCTC 7292 / S-41)).